A 134-amino-acid chain; its full sequence is T-cell receptor alpha chain V region RL-5 (134 aa).

An N-terminal signal peptide occupies residues 1-20 (MFSASCSVTVVVLLITVRRT). The interval 21 to 114 (NGASVTQTEG…DSAVYYCALR (94 aa)) is v segment. The segment at 115 to 134 (RGASNKLTLGTGTLLKVELN) is j segment. Asn-134 is a glycosylation site (N-linked (GlcNAc...) asparagine).

Rearrangement with the C region would elongate the sequence with Ile-Thr-; which creates a potential N-glycosylation site at Asn-134.

This Oryctolagus cuniculus (Rabbit) protein is T-cell receptor alpha chain V region RL-5.